Consider the following 302-residue polypeptide: Sulfate adenylyltransferase subunit 2 (302 aa).

Belongs to the PAPS reductase family. CysD subfamily. In terms of assembly, heterodimer composed of CysD, the smaller subunit, and CysN.

It carries out the reaction sulfate + ATP + H(+) = adenosine 5'-phosphosulfate + diphosphate. The protein operates within sulfur metabolism; hydrogen sulfide biosynthesis; sulfite from sulfate: step 1/3. Functionally, with CysN forms the ATP sulfurylase (ATPS) that catalyzes the adenylation of sulfate producing adenosine 5'-phosphosulfate (APS) and diphosphate, the first enzymatic step in sulfur assimilation pathway. APS synthesis involves the formation of a high-energy phosphoric-sulfuric acid anhydride bond driven by GTP hydrolysis by CysN coupled to ATP hydrolysis by CysD. In Yersinia pestis bv. Antiqua (strain Nepal516), this protein is Sulfate adenylyltransferase subunit 2.